The primary structure comprises 497 residues: uncharacterized protein (497 aa).

266–273 (GIQGTGKS) contributes to the ATP binding site.

The protein belongs to the AAA ATPase family. Highly divergent.

It localises to the plastid. The protein resides in the chloroplast. This is an uncharacterized protein from Trieres chinensis (Marine centric diatom).